We begin with the raw amino-acid sequence, 457 residues long: Argininosuccinate lyase (457 aa).

Belongs to the lyase 1 family. Argininosuccinate lyase subfamily.

The protein resides in the cytoplasm. It catalyses the reaction 2-(N(omega)-L-arginino)succinate = fumarate + L-arginine. Its pathway is amino-acid biosynthesis; L-arginine biosynthesis; L-arginine from L-ornithine and carbamoyl phosphate: step 3/3. This Escherichia coli O139:H28 (strain E24377A / ETEC) protein is Argininosuccinate lyase.